Consider the following 471-residue polypeptide: Isochorismate synthase MenF (471 aa).

Lys-226 serves as the catalytic Proton acceptor. Catalysis depends on Glu-275, which acts as the Proton donor. Residues Glu-319 and Glu-454 each contribute to the Mg(2+) site.

Belongs to the isochorismate synthase family. It depends on Mg(2+) as a cofactor.

It carries out the reaction chorismate = isochorismate. Its pathway is quinol/quinone metabolism; 1,4-dihydroxy-2-naphthoate biosynthesis; 1,4-dihydroxy-2-naphthoate from chorismate: step 1/7. It functions in the pathway quinol/quinone metabolism; menaquinone biosynthesis. Its function is as follows. Catalyzes the conversion of chorismate to isochorismate. This chain is Isochorismate synthase MenF, found in Bacillus subtilis (strain 168).